The following is a 1357-amino-acid chain: DNA-directed RNA polymerase subunit beta (1357 aa).

The protein belongs to the RNA polymerase beta chain family. As to quaternary structure, the RNAP catalytic core consists of 2 alpha, 1 beta, 1 beta' and 1 omega subunit. When a sigma factor is associated with the core the holoenzyme is formed, which can initiate transcription.

It catalyses the reaction RNA(n) + a ribonucleoside 5'-triphosphate = RNA(n+1) + diphosphate. DNA-dependent RNA polymerase catalyzes the transcription of DNA into RNA using the four ribonucleoside triphosphates as substrates. In Hahella chejuensis (strain KCTC 2396), this protein is DNA-directed RNA polymerase subunit beta.